A 170-amino-acid polypeptide reads, in one-letter code: MNLKDFIRDIPDFPKPGIIFKDVTPMLKDPGAFKVCISSLKELVKDFEFNLIVAPEARGFIFAAPLALELEKGFVPIRKPGKLPYKTVSVEYSLEYGTATLEMHTDAIKEGDKVLIVDDVLATGGTMKAIAEMVEKVGGTISGIVSLVELSFLEPRKKLSGYEVRSIITY.

Belongs to the purine/pyrimidine phosphoribosyltransferase family. As to quaternary structure, homodimer.

It is found in the cytoplasm. It carries out the reaction AMP + diphosphate = 5-phospho-alpha-D-ribose 1-diphosphate + adenine. Its pathway is purine metabolism; AMP biosynthesis via salvage pathway; AMP from adenine: step 1/1. Its function is as follows. Catalyzes a salvage reaction resulting in the formation of AMP, that is energically less costly than de novo synthesis. The chain is Adenine phosphoribosyltransferase from Kosmotoga olearia (strain ATCC BAA-1733 / DSM 21960 / TBF 19.5.1).